Consider the following 138-residue polypeptide: MTKAIQKIGSRRNGRIASRKNGRRIPKGVIHVQASFNNTIVTVTDVRGQVVSWSSAGTCGFRGTRRGTPFAAQTAAANAIRTVVDQGMQRAEVMIKGPGLGRDAALRAIRRSGILLSFVRDVTPMPHNGCRPPKKRRV.

The disordered stretch occupies residues 1–21; it reads MTKAIQKIGSRRNGRIASRKN. Positions 9 to 21 are enriched in basic residues; it reads GSRRNGRIASRKN.

The protein belongs to the universal ribosomal protein uS11 family. In terms of assembly, part of the 30S ribosomal subunit.

Its subcellular location is the plastid. It localises to the chloroplast. The protein is Small ribosomal subunit protein uS11c of Ceratophyllum demersum (Rigid hornwort).